The following is a 120-amino-acid chain: Ribonuclease P protein component (120 aa).

This sequence belongs to the RnpA family. As to quaternary structure, consists of a catalytic RNA component (M1 or rnpB) and a protein subunit.

The enzyme catalyses Endonucleolytic cleavage of RNA, removing 5'-extranucleotides from tRNA precursor.. Functionally, RNaseP catalyzes the removal of the 5'-leader sequence from pre-tRNA to produce the mature 5'-terminus. It can also cleave other RNA substrates such as 4.5S RNA. The protein component plays an auxiliary but essential role in vivo by binding to the 5'-leader sequence and broadening the substrate specificity of the ribozyme. This is Ribonuclease P protein component from Dehalococcoides mccartyi (strain CBDB1).